A 1295-amino-acid polypeptide reads, in one-letter code: MKILRGSPALSAFRITKLLSVCQEQQLPVNDIYAEYVHFAEINASLSDVDSAKLQQLLKYGPSLAEHEPQGTLLLVTPRPGTISPWSSKATDIAHNCGLSQVVRLERGVAYYIQSGEMSDTQWQILSSLLHDRMMETVFTQLEQAEKLFSRQQPVPLKRIDILQAGRSALETANIELGLALASDEIDYLMDAFQKLGRNPTDVELYMFAQANSEHCRHKIFNADWIIDSQAQPKSLFKMIKNTYEQTPDYVLSAYKDNAAVMEGSAVGRFFASAENGSYDYHQEQAHILMKVETHNHPTAISPWPGASTGSGGEIRDEGATGRGAKPKAGLVGFSVSNLRIPGFEQPWEEDFGKPERIVSALDIMMEGPLGGAAFNNEFGRPALLGYFRTYEEKVNSHNGSELRGYHKPIMLAGGIGNIRDEHVKKGEISVGAKLIVLGGPSMNIGLGGGAASSMASGQSDADLDFASVQRDNPEMERRCQEVIDRCWQLGENNPILFIHDVGAGGLSNAMPELVSDGGRGGRFELRKILNDEPGMSPLEVWCNESQERYVLAVAPEQLPLFEEICRRERAPYAIIGEATEERHLLLNDEHFDNQPIDMPLDVLLGKTPKMLRDVTTLKASGESLERRDIDLAEAVKRIMHLPAVAEKTFLITIGDRSVTGMVSRDQMVGPWQIPVADCAVTTASLDSYYGEAMSMGERAPVALLDFAASARMAVGEALTNIASAYIQDLKRIKLSANWMSAAGHPGEDAGLYAAVKAVGEELCPALGLTIPVGKDSMSMKTRWHDQGEEREMTAPLSLVITAFARVEDVRRTVTPELSTDEDNALLLIDLGQGKNTLGGTALAQVYRLLGNKTADVRSAEQLAGFFNAIQQLIAEQKLLAYHDRSDGGLLVTLAEMAFAGHCGIEADISVFDEDILAGLFTEELGAVVQIRASDRGFVESILAEHGLADCVHYLGKAQAGDDFVIFSGNTEVYRQNRSTLRLWWAETTWQMQRLRDNPACADQEHQAKQDNQDPGLNVKLTFDISEDIAAPYILQQVRPKVAVLREQGVNSHVEMAAAFHRAGFEAIDVHMSDLLSGRIGLSQFQTLVACGGFSYGDVLGAGEGWAKSILFNERVRDQFAVFFARPDTLALGVCNGCQMMSNLRELIPGAEHWPRFVRNRSERFEARFSLVEITDSPSLFLQDMVGSRIPIAVSHGEGQVEFRNRQHLEMLESNQLVALRYVNNYGQVTENYPANPNGSVNGITAVTSLDGRATVMMPHPERVSRTVNNSWHPDEWREDGPWMRIFRNARKQLG.

Residues 302 to 327 (SPWPGASTGSGGEIRDEGATGRGAKP) are disordered. Residues 306–317 (GASTGSGGEIRD) and Ala-677 each bind ATP. Residues Asp-678, Glu-717, Asn-721, and Asp-884 each contribute to the Mg(2+) site. An ATP-binding site is contributed by Ser-886. One can recognise a Glutamine amidotransferase type-1 domain in the interval 1042-1295 (VAVLREQGVN…IFRNARKQLG (254 aa)). Cys-1135 (nucleophile) is an active-site residue. Residues His-1260 and Glu-1262 contribute to the active site.

In the N-terminal section; belongs to the FGAMS family. In terms of assembly, monomer.

The protein localises to the cytoplasm. The catalysed reaction is N(2)-formyl-N(1)-(5-phospho-beta-D-ribosyl)glycinamide + L-glutamine + ATP + H2O = 2-formamido-N(1)-(5-O-phospho-beta-D-ribosyl)acetamidine + L-glutamate + ADP + phosphate + H(+). It participates in purine metabolism; IMP biosynthesis via de novo pathway; 5-amino-1-(5-phospho-D-ribosyl)imidazole from N(2)-formyl-N(1)-(5-phospho-D-ribosyl)glycinamide: step 1/2. Functionally, phosphoribosylformylglycinamidine synthase involved in the purines biosynthetic pathway. Catalyzes the ATP-dependent conversion of formylglycinamide ribonucleotide (FGAR) and glutamine to yield formylglycinamidine ribonucleotide (FGAM) and glutamate. The chain is Phosphoribosylformylglycinamidine synthase from Photorhabdus laumondii subsp. laumondii (strain DSM 15139 / CIP 105565 / TT01) (Photorhabdus luminescens subsp. laumondii).